A 1129-amino-acid polypeptide reads, in one-letter code: Phospholipid-transporting ATPase 11C (1129 aa).

The Cytoplasmic segment spans residues 1-83 (MFRRTLNRLC…IIFLVQVTVD (83 aa)). A helical transmembrane segment spans residues 84–104 (TPTSPVTSGLPLFFVITVTAI). Residues 105–287 (KQGYEDWLRH…SQKCSAVEKS (183 aa)) are Extracellular-facing. Residues 288 to 308 (INAFLIVYLFILLTKAAVCTT) form a helical membrane-spanning segment. The Cytoplasmic portion of the chain corresponds to 309–343 (LKYVWQSSPYNDEPWYNQKTQKERETFQVLKMFTD). Residues 344–364 (FLSFMVLFNFIIPVSMYVTVE) form a helical membrane-spanning segment. At 365 to 876 (MQKFLGSFFI…YVRIAHLVQY (512 aa)) the chain is on the extracellular side. The active-site 4-aspartylphosphate intermediate is Asp-409. ATP is bound by residues Asp-409, Lys-410, and Thr-411. A Mg(2+)-binding site is contributed by Asp-409. Residue Thr-411 participates in Mg(2+) binding. Ser-442 carries the post-translational modification Phosphoserine. Glu-498, Phe-540, Lys-563, and Arg-594 together coordinate ATP. Positions 607–643 (DFERINAQLVEAKMALQDREEKLEKVFDEIETNMNLI) form a coiled coil. Positions 674, 675, and 676 each coordinate ATP. A coiled-coil region spans residues 695 to 726 (TELLELTTKTIEESERKEDRLHELLIEYRKKL). Residues Arg-789 and Lys-795 each contribute to the ATP site. Residue Asp-816 participates in Mg(2+) binding. ATP contacts are provided by Asn-819 and Asp-820. Mg(2+) is bound at residue Asp-820. Residues 877 to 897 (FFYKNLCFILPQFLYQFFCGF) form a helical membrane-spanning segment. Topologically, residues 898–905 (SQQPLYDA) are cytoplasmic. The chain crosses the membrane as a helical span at residues 906-926 (AYLTMYNICFTSLPILAYSLL). The Extracellular segment spans residues 927 to 952 (EQHINIDTLTADPRLYMKITGNAMLQ). The helical transmembrane segment at 953 to 973 (LGPFLHWTFLAAFEGTVFFFG) threads the bilayer. The Cytoplasmic segment spans residues 974–988 (TYFLFQTSSLEDNGK). A helical transmembrane segment spans residues 989–1009 (IYGNWTFGTIVFTVLVFTVTL). Residues 1010 to 1023 (KLALDTRFWTWINH) lie on the Extracellular side of the membrane. The chain crosses the membrane as a helical span at residues 1024–1044 (FVIWGSLAFYVFFSFFWGGII). The Cytoplasmic segment spans residues 1045 to 1066 (WPFLKQQRMYFVFAQMLCSVST). A helical transmembrane segment spans residues 1067–1087 (WLAIILLIFISLFPEILLIVV). At 1088 to 1129 (KNVRRRSARRNLSCRRASDSLSARPSVRPLLLRTFSDESNIL) the chain is on the extracellular side. 3 positions are modified to phosphoserine: Ser-1105, Ser-1113, and Ser-1123. The short motif at 1113–1118 (SVRPLL) is the Di-leucine motif element.

This sequence belongs to the cation transport ATPase (P-type) (TC 3.A.3) family. Type IV subfamily. In terms of assembly, component of a P4-ATPase flippase complex which consists of a catalytic alpha subunit ATP11C and an accessory beta subunit TMEM30A. Mg(2+) is required as a cofactor. Proteolytically cleaved by CASP3, CASP6 and CASP7. Post-translationally, phosphorylated at Ser-1113 likely by PRKCA; this creates a functional di-leucine motif that is sufficient for endocytosis. As to expression, widely expressed. Expressed in retina, brain, liver and testes (at protein level). Expressed in lung, bone marrow, lymph nodes, prostate, ovary and uterus. Expressed in fetus.

Its subcellular location is the cell membrane. The protein resides in the endoplasmic reticulum membrane. It localises to the early endosome membrane. It is found in the recycling endosome membrane. It carries out the reaction ATP + H2O + phospholipidSide 1 = ADP + phosphate + phospholipidSide 2.. The catalysed reaction is a 1,2-diacyl-sn-glycero-3-phospho-L-serine(out) + ATP + H2O = a 1,2-diacyl-sn-glycero-3-phospho-L-serine(in) + ADP + phosphate + H(+). It catalyses the reaction a 1,2-diacyl-sn-glycero-3-phosphoethanolamine(out) + ATP + H2O = a 1,2-diacyl-sn-glycero-3-phosphoethanolamine(in) + ADP + phosphate + H(+). Catalytic component of a P4-ATPase flippase complex which catalyzes the hydrolysis of ATP coupled to the transport of aminophospholipids, phosphatidylserines (PS) and phosphatidylethanolamines (PE), from the outer to the inner leaflet of the plasma membrane. Major PS-flippase in immune cell subsets. In erythrocyte plasma membrane, it is required to maintain PS in the inner leaflet preventing its exposure on the surface. This asymmetric distribution is critical for the survival of erythrocytes in circulation since externalized PS is a phagocytic signal for erythrocyte clearance by splenic macrophages. Required for B cell differentiation past the pro-B cell stage. Seems to mediate PS flipping in pro-B cells. May be involved in the transport of cholestatic bile acids. In Mus musculus (Mouse), this protein is Phospholipid-transporting ATPase 11C.